The following is a 631-amino-acid chain: Chaperone protein DnaK (631 aa).

Thr197 bears the Phosphothreonine; by autocatalysis mark. A disordered region spans residues 598 to 631 (MYKKEQGQTGGTEQGGTEQKKSGGDDDVIDAEVE). The span at 622–631 (DDDVIDAEVE) shows a compositional bias: acidic residues.

It belongs to the heat shock protein 70 family.

Its function is as follows. Acts as a chaperone. The chain is Chaperone protein DnaK from Nitratiruptor sp. (strain SB155-2).